A 212-amino-acid polypeptide reads, in one-letter code: Uracil phosphoribosyltransferase (212 aa).

5-phospho-alpha-D-ribose 1-diphosphate is bound by residues Arg78, Arg103, and 130–138; that span reads DPMLATGSS. Uracil is bound by residues Ile193 and 198–200; that span reads GDA. Residue Asp199 participates in 5-phospho-alpha-D-ribose 1-diphosphate binding.

The protein belongs to the UPRTase family. Mg(2+) is required as a cofactor.

The catalysed reaction is UMP + diphosphate = 5-phospho-alpha-D-ribose 1-diphosphate + uracil. It functions in the pathway pyrimidine metabolism; UMP biosynthesis via salvage pathway; UMP from uracil: step 1/1. Its activity is regulated as follows. Allosterically activated by GTP. Catalyzes the conversion of uracil and 5-phospho-alpha-D-ribose 1-diphosphate (PRPP) to UMP and diphosphate. The sequence is that of Uracil phosphoribosyltransferase from Pseudomonas fluorescens (strain Pf0-1).